A 243-amino-acid chain; its full sequence is Segregation and condensation protein A (243 aa).

It belongs to the ScpA family. In terms of assembly, component of a cohesin-like complex composed of ScpA, ScpB and the Smc homodimer, in which ScpA and ScpB bind to the head domain of Smc. The presence of the three proteins is required for the association of the complex with DNA.

The protein localises to the cytoplasm. Functionally, participates in chromosomal partition during cell division. May act via the formation of a condensin-like complex containing Smc and ScpB that pull DNA away from mid-cell into both cell halves. This chain is Segregation and condensation protein A, found in Staphylococcus haemolyticus (strain JCSC1435).